Here is a 448-residue protein sequence, read N- to C-terminus: Trigger factor (448 aa).

The 86-residue stretch at Gly172–Pro257 folds into the PPIase FKBP-type domain.

It belongs to the FKBP-type PPIase family. Tig subfamily.

It localises to the cytoplasm. It carries out the reaction [protein]-peptidylproline (omega=180) = [protein]-peptidylproline (omega=0). Involved in protein export. Acts as a chaperone by maintaining the newly synthesized protein in an open conformation. Functions as a peptidyl-prolyl cis-trans isomerase. The sequence is that of Trigger factor from Burkholderia orbicola (strain MC0-3).